The primary structure comprises 462 residues: GTPase Der (462 aa).

EngA-type G domains follow at residues 3 to 166 (PVIA…ITEM) and 175 to 348 (IKIA…HSAI). GTP is bound by residues 9–16 (GRPNVGKS), 56–60 (DTGGI), 118–121 (NKTD), 181–188 (GRPNVGKS), 228–232 (DTAGV), and 293–296 (NKWD). A KH-like domain is found at 349 to 433 (QSFSTPKLTR…PLKIEFKGGQ (85 aa)).

The protein belongs to the TRAFAC class TrmE-Era-EngA-EngB-Septin-like GTPase superfamily. EngA (Der) GTPase family. In terms of assembly, associates with the 50S ribosomal subunit.

GTPase that plays an essential role in the late steps of ribosome biogenesis. In Legionella pneumophila (strain Lens), this protein is GTPase Der.